The primary structure comprises 389 residues: Lipid-A-disaccharide synthase (389 aa).

The protein belongs to the LpxB family.

The catalysed reaction is a lipid X + a UDP-2-N,3-O-bis[(3R)-3-hydroxyacyl]-alpha-D-glucosamine = a lipid A disaccharide + UDP + H(+). Its pathway is bacterial outer membrane biogenesis; LPS lipid A biosynthesis. In terms of biological role, condensation of UDP-2,3-diacylglucosamine and 2,3-diacylglucosamine-1-phosphate to form lipid A disaccharide, a precursor of lipid A, a phosphorylated glycolipid that anchors the lipopolysaccharide to the outer membrane of the cell. The protein is Lipid-A-disaccharide synthase of Burkholderia ambifaria (strain ATCC BAA-244 / DSM 16087 / CCUG 44356 / LMG 19182 / AMMD) (Burkholderia cepacia (strain AMMD)).